The chain runs to 422 residues: Protein MANNAN SYNTHESIS-RELATED 1 (422 aa).

Over 1 to 6 the chain is Cytoplasmic; the sequence is MGVDLR. The chain crosses the membrane as a helical; Signal-anchor for type II membrane protein span at residues 7 to 26; sequence QVVAGILTITMFVMLGQMLH. Residues 27 to 422 lie on the Lumenal side of the membrane; it reads RDYFDSLQEK…KNHLAYSCFC (396 aa). Residue 263–265 coordinates substrate; sequence DLR.

This sequence belongs to the glycosyltransferase GT106 family. In terms of tissue distribution, widely expressed.

Its subcellular location is the golgi apparatus membrane. It participates in glycan biosynthesis. Functionally, glycosyltransferase involved in mannan biosynthesis. This is Protein MANNAN SYNTHESIS-RELATED 1 from Arabidopsis thaliana (Mouse-ear cress).